A 460-amino-acid chain; its full sequence is Centrosomal protein CEP57L1 (460 aa).

Residue S49 is modified to Phosphoserine. 2 coiled-coil regions span residues 51–228 (NSQA…EISK) and 317–384 (ISIC…LKKH). Residues 399–410 (KMSEASGIQQED) are compositionally biased toward polar residues. Positions 399 to 423 (KMSEASGIQQEDSYPKGSKNIKNSP) are disordered.

Belongs to the translokin family.

It localises to the cytoplasm. Its subcellular location is the cytoskeleton. The protein localises to the microtubule organizing center. The protein resides in the centrosome. Centrosomal protein which may be required for microtubule attachment to centrosomes. In Homo sapiens (Human), this protein is Centrosomal protein CEP57L1 (CEP57L1).